We begin with the raw amino-acid sequence, 157 residues long: Small ribosomal subunit protein uS7 (157 aa).

It belongs to the universal ribosomal protein uS7 family. Part of the 30S ribosomal subunit. Contacts proteins S9 and S11.

Functionally, one of the primary rRNA binding proteins, it binds directly to 16S rRNA where it nucleates assembly of the head domain of the 30S subunit. Is located at the subunit interface close to the decoding center, probably blocks exit of the E-site tRNA. This Paracidovorax citrulli (strain AAC00-1) (Acidovorax citrulli) protein is Small ribosomal subunit protein uS7.